Reading from the N-terminus, the 257-residue chain is MADTWSIGAHTFTSRLLVGTGKYPDFTTMQRALVASGAEVVTVAVRRLELSKSGEASLLEWIPKGMKLLPNTAACFTAEEAIRTARLGRELEMGDLVKLEVIGDRRTLFPDVEGLVAAAKVLVKEGFTVLPYTNDDPVTAKKLEDAGCAAVMPLGAPIGSGLGIRNPYNLRIIMETVKVPVLVDAGVGTASDAAVAMELGAVAVLMNTAIAEARDPVLMAEAMRAGVEGGRKAYLAGRIPTKLHASASSPMTGLIGT.

K98 acts as the Schiff-base intermediate with DXP in catalysis. 1-deoxy-D-xylulose 5-phosphate contacts are provided by residues G159, 185 to 186, and 207 to 208; these read AG and NT.

It belongs to the ThiG family. In terms of assembly, homotetramer. Forms heterodimers with either ThiH or ThiS.

The protein localises to the cytoplasm. The enzyme catalyses [ThiS sulfur-carrier protein]-C-terminal-Gly-aminoethanethioate + 2-iminoacetate + 1-deoxy-D-xylulose 5-phosphate = [ThiS sulfur-carrier protein]-C-terminal Gly-Gly + 2-[(2R,5Z)-2-carboxy-4-methylthiazol-5(2H)-ylidene]ethyl phosphate + 2 H2O + H(+). The protein operates within cofactor biosynthesis; thiamine diphosphate biosynthesis. Functionally, catalyzes the rearrangement of 1-deoxy-D-xylulose 5-phosphate (DXP) to produce the thiazole phosphate moiety of thiamine. Sulfur is provided by the thiocarboxylate moiety of the carrier protein ThiS. In vitro, sulfur can be provided by H(2)S. The polypeptide is Thiazole synthase (Anaeromyxobacter sp. (strain Fw109-5)).